Consider the following 359-residue polypeptide: Caffeic acid 3-O-methyltransferase (359 aa).

Residue 126–132 (MNQDKVL) participates in substrate binding. A substrate binding region spans residues 158–176 (AFEYHGTDPRFNKVFNRGM). S-adenosyl-L-methionine-binding residues include Gly204, Asp227, Asp247, Met248, and Lys261. The active-site Proton acceptor is His265.

It belongs to the class I-like SAM-binding methyltransferase superfamily. Cation-independent O-methyltransferase family. COMT subfamily. As to quaternary structure, homodimer. In terms of tissue distribution, fruit. Not expressed in leaf.

It catalyses the reaction (E)-caffeate + S-adenosyl-L-methionine = (E)-ferulate + S-adenosyl-L-homocysteine + H(+). It functions in the pathway aromatic compound metabolism; phenylpropanoid biosynthesis. Functionally, catalyzes the conversion of caffeic acid to ferulic acid and of 5-hydroxyferulic acid to sinapic acid. The resulting products may subsequently be converted to the corresponding alcohols that are incorporated into lignins. The polypeptide is Caffeic acid 3-O-methyltransferase (COMT) (Capsicum annuum (Capsicum pepper)).